The following is a 590-amino-acid chain: Aspartate--tRNA(Asp/Asn) ligase (590 aa).

Glu175 provides a ligand contact to L-aspartate. Residues 199–202 (QQYK) form an aspartate region. Arg221 and His450 together coordinate L-aspartate. ATP is bound at residue 221 to 223 (RDE). Glu484 is a binding site for ATP. L-aspartate is bound at residue Arg491. 536–539 (GVDR) lines the ATP pocket.

This sequence belongs to the class-II aminoacyl-tRNA synthetase family. Type 1 subfamily. As to quaternary structure, homodimer.

It localises to the cytoplasm. The catalysed reaction is tRNA(Asx) + L-aspartate + ATP = L-aspartyl-tRNA(Asx) + AMP + diphosphate. Its function is as follows. Aspartyl-tRNA synthetase with relaxed tRNA specificity since it is able to aspartylate not only its cognate tRNA(Asp) but also tRNA(Asn). Reaction proceeds in two steps: L-aspartate is first activated by ATP to form Asp-AMP and then transferred to the acceptor end of tRNA(Asp/Asn). The polypeptide is Aspartate--tRNA(Asp/Asn) ligase (Nitrobacter hamburgensis (strain DSM 10229 / NCIMB 13809 / X14)).